Here is a 110-residue protein sequence, read N- to C-terminus: NADH-quinone oxidoreductase subunit K (110 aa).

The next 3 helical transmembrane spans lie at 13-33, 41-61, and 73-93; these read LNHY…GLFM, ILMS…AFSV, and IIIL…LLIY.

The protein belongs to the complex I subunit 4L family. NDH-1 is composed of 14 different subunits. Subunits NuoA, H, J, K, L, M, N constitute the membrane sector of the complex.

It is found in the cell inner membrane. The enzyme catalyses a quinone + NADH + 5 H(+)(in) = a quinol + NAD(+) + 4 H(+)(out). NDH-1 shuttles electrons from NADH, via FMN and iron-sulfur (Fe-S) centers, to quinones in the respiratory chain. The immediate electron acceptor for the enzyme in this species is believed to be ubiquinone. Couples the redox reaction to proton translocation (for every two electrons transferred, four hydrogen ions are translocated across the cytoplasmic membrane), and thus conserves the redox energy in a proton gradient. The chain is NADH-quinone oxidoreductase subunit K from Rickettsia prowazekii (strain Madrid E).